The sequence spans 394 residues: MAVAFNRDKPHCNIGTIGHVDHGKTSLATAITIVSSELSGGAVKVKNYDEIDSAPEERARGITIQTAHVEFISKKRHYALVDCPGHVDYIKNMITGASQTDGLILVVSGVDGVMPQTREHVLLAKQVGVPSIIVCINKIDQADPELLELIEMEVRELLTKYDFPGDTVPIIRCSALKAINGDSDAKKGILELMDSIDDYIPQPTRVLDQPFLMPIEDVFSILGRGTVVTGRIERGVIKVGDEVEIVGLRSTQKTICTGVEMFKKELDQGQAGDNVGILLRGIKREDVERGQVLAKPGTITPHCSFEAEVYVLTKEEGGRHTPFFQNYRPQFYCRTTDVTGEIALLSGKEMVMPGDHATLSVNLVAPIAMDQGLSFAIREGGKTIGAGKVSKIIK.

A tr-type G domain is found at 9–204 (KPHCNIGTIG…SIDDYIPQPT (196 aa)). The tract at residues 18-25 (GHVDHGKT) is G1. Residue 18-25 (GHVDHGKT) coordinates GTP. T25 contacts Mg(2+). The interval 61 to 65 (GITIQ) is G2. Positions 82–85 (DCPG) are G3. GTP contacts are provided by residues 82–86 (DCPGH) and 137–140 (NKID). A G4 region spans residues 137–140 (NKID). Residues 174-176 (SAL) form a G5 region.

This sequence belongs to the TRAFAC class translation factor GTPase superfamily. Classic translation factor GTPase family. EF-Tu/EF-1A subfamily. As to quaternary structure, monomer.

It localises to the cytoplasm. The enzyme catalyses GTP + H2O = GDP + phosphate + H(+). In terms of biological role, GTP hydrolase that promotes the GTP-dependent binding of aminoacyl-tRNA to the A-site of ribosomes during protein biosynthesis. The sequence is that of Elongation factor Tu 2 from Orientia tsutsugamushi (strain Boryong) (Rickettsia tsutsugamushi).